We begin with the raw amino-acid sequence, 434 residues long: 3-phosphoshikimate 1-carboxyvinyltransferase (434 aa).

3-phosphoshikimate is bound by residues Lys-15, Ser-16, and Arg-20. Lys-15 serves as a coordination point for phosphoenolpyruvate. The phosphoenolpyruvate site is built by Gly-96 and Arg-124. Ser-169, Gln-171, Ser-195, Asp-319, and Lys-346 together coordinate 3-phosphoshikimate. A phosphoenolpyruvate-binding site is contributed by Gln-171. Residue Asp-319 is the Proton acceptor of the active site. Phosphoenolpyruvate-binding residues include Arg-350 and Arg-394.

It belongs to the EPSP synthase family. Monomer.

Its subcellular location is the cytoplasm. It carries out the reaction 3-phosphoshikimate + phosphoenolpyruvate = 5-O-(1-carboxyvinyl)-3-phosphoshikimate + phosphate. Its pathway is metabolic intermediate biosynthesis; chorismate biosynthesis; chorismate from D-erythrose 4-phosphate and phosphoenolpyruvate: step 6/7. In terms of biological role, catalyzes the transfer of the enolpyruvyl moiety of phosphoenolpyruvate (PEP) to the 5-hydroxyl of shikimate-3-phosphate (S3P) to produce enolpyruvyl shikimate-3-phosphate and inorganic phosphate. The protein is 3-phosphoshikimate 1-carboxyvinyltransferase of Chlorobium phaeobacteroides (strain DSM 266 / SMG 266 / 2430).